The sequence spans 130 residues: Cytochrome c oxidase subunit 13, mitochondrial (130 aa).

The transit peptide at 1-31 (MSMMNRNIGFLSRTLKTSVPKRAGLLSFRAY) directs the protein to the mitochondrion. The Mitochondrial matrix portion of the chain corresponds to 32–61 (SNEAKVNWLEEVQAEEEHAKRSSEFWKKVT). Residues 62–80 (YYIGGPALILASANAYYIY) form a helical membrane-spanning segment. At 81-130 (CKHQEHAKHVEDTDPGYSFENLRFKKYPWGDGSKTLFWNDKVNHLKKDDE) the chain is on the mitochondrial intermembrane side.

Belongs to the cytochrome c oxidase subunit 6A family. As to quaternary structure, component of the cytochrome c oxidase (complex IV, CIV), a multisubunit enzyme composed of a catalytic core of 3 subunits and several supernumerary subunits. The complex exists as a monomer or a dimer and forms supercomplexes (SCs) in the inner mitochondrial membrane with ubiquinol-cytochrome c oxidoreductase (cytochrome b-c1 complex, complex III, CIII).

Its subcellular location is the mitochondrion inner membrane. Its pathway is energy metabolism; oxidative phosphorylation. Functionally, component of the cytochrome c oxidase, the last enzyme in the mitochondrial electron transport chain which drives oxidative phosphorylation. The respiratory chain contains 3 multisubunit complexes succinate dehydrogenase (complex II, CII), ubiquinol-cytochrome c oxidoreductase (cytochrome b-c1 complex, complex III, CIII) and cytochrome c oxidase (complex IV, CIV), that cooperate to transfer electrons derived from NADH and succinate to molecular oxygen, creating an electrochemical gradient over the inner membrane that drives transmembrane transport and the ATP synthase. Cytochrome c oxidase is the component of the respiratory chain that catalyzes the reduction of oxygen to water. Electrons originating from reduced cytochrome c in the intermembrane space (IMS) are transferred via the dinuclear copper A center (CU(A)) of subunit 2 and heme A of subunit 1 to the active site in subunit 1, a binuclear center (BNC) formed by heme A3 and copper B (CU(B)). The BNC reduces molecular oxygen to 2 water molecules unsing 4 electrons from cytochrome c in the IMS and 4 protons from the mitochondrial matrix. This chain is Cytochrome c oxidase subunit 13, mitochondrial (cox13), found in Schizosaccharomyces pombe (strain 972 / ATCC 24843) (Fission yeast).